The sequence spans 686 residues: Pentatricopeptide repeat-containing protein At4g08210 (686 aa).

18 PPR repeats span residues 4–38 (DLKL…GISQ), 39–69 (NVFI…MSER), 70–104 (NIVT…EEEA), 106–140 (NEFM…NLRG), 141–171 (DVVL…ILRP), 172–206 (SSTS…NVVS), 207–236 (WNCL…GLVL), 237–271 (DGFA…GLES), 272–302 (SPFA…EKLA), 306–340 (SVAV…DLCF), 341–375 (DSYT…GYEL), 376–406 (DYIV…LPNK), 407–441 (DIIA…GLDA), 442–476 (DQFI…GYES), 477–507 (EPVT…MLER), 508–542 (DVVS…GIEP), 543–573 (NKVT…MKSE), and 579–609 (YLEH…MPLE). A type E motif; degenerate region spans residues 614–686 (IWTSLLTACG…AKESGMSWII (73 aa)).

It belongs to the PPR family. PCMP-E subfamily.

This Arabidopsis thaliana (Mouse-ear cress) protein is Pentatricopeptide repeat-containing protein At4g08210 (PCMP-E100).